The sequence spans 147 residues: Large ribosomal subunit protein bL9 (147 aa).

Belongs to the bacterial ribosomal protein bL9 family.

Its function is as follows. Binds to the 23S rRNA. This Geobacter sp. (strain M21) protein is Large ribosomal subunit protein bL9.